We begin with the raw amino-acid sequence, 260 residues long: MLAIISPAKTLDFETPAPNFPFANSQPKLTAYSQQLIDICKQFSPAELGSLMSISDKLASLNVARFAEWQLAHNEQNAKAALFAFKGDVYTGLDAETLTQAQVEYAQVHLRMLSGLYGLLKPLDLMQPYRLEMGTKLVNPKGKDLYAFWGDIITQHLQTAMDEQGDNILVNLASDEYYGAVKPQKLQATIIKPVFLDEKNGKFKQISFYAKKARGMMVRFILETQPTSVEQLKAFNYGSYWFDEDASGATELVFKREEQA.

This sequence belongs to the UPF0246 family.

The protein is UPF0246 protein APJL_0596 of Actinobacillus pleuropneumoniae serotype 3 (strain JL03).